The primary structure comprises 212 residues: Thymidylate kinase (212 aa).

11–18 (GMEGAGKS) contacts ATP.

It belongs to the thymidylate kinase family.

The enzyme catalyses dTMP + ATP = dTDP + ADP. Its function is as follows. Phosphorylation of dTMP to form dTDP in both de novo and salvage pathways of dTTP synthesis. This Colwellia psychrerythraea (strain 34H / ATCC BAA-681) (Vibrio psychroerythus) protein is Thymidylate kinase.